Consider the following 155-residue polypeptide: Ribosomal RNA large subunit methyltransferase H (155 aa).

Residues leucine 72, glycine 103, and 122 to 127 (LSPLTL) contribute to the S-adenosyl-L-methionine site.

This sequence belongs to the RNA methyltransferase RlmH family. Homodimer.

Its subcellular location is the cytoplasm. It carries out the reaction pseudouridine(1915) in 23S rRNA + S-adenosyl-L-methionine = N(3)-methylpseudouridine(1915) in 23S rRNA + S-adenosyl-L-homocysteine + H(+). Specifically methylates the pseudouridine at position 1915 (m3Psi1915) in 23S rRNA. The protein is Ribosomal RNA large subunit methyltransferase H of Histophilus somni (strain 129Pt) (Haemophilus somnus).